Consider the following 257-residue polypeptide: MTTTQVTLIQIDNYGPWTVTPEPRREMDLQSLQSRLFADIAQFMGPRDAYVFSTRYDNMIAVTNGLDGAAHAALQESIGNRYPVSVSLGTGVSERPIDALEAANRLLQTEGSAQDESRTEVLAGDYLTETAPSDLQIAHFDVVNVTGKYTDRLNEFDTFLNIERAYGSLTRYLRESHGALSFFVGGDNVVAVCPDLPEGAFADTVAHVADDVDIELQVGVGRGASAHEAGFAAKHALEACRNDGTSVELSVAPALSD.

It belongs to the archaeal-type GTP cyclohydrolase family.

It carries out the reaction GTP + 3 H2O = 2-amino-5-formylamino-6-(5-phospho-D-ribosylamino)pyrimidin-4(3H)-one + 2 phosphate + 2 H(+). In terms of biological role, catalyzes the formation of 2-amino-5-formylamino-6-ribofuranosylamino-4(3H)-pyrimidinone ribonucleotide monophosphate and inorganic phosphate from GTP. Also has an independent pyrophosphate phosphohydrolase activity. The protein is GTP cyclohydrolase III of Halorubrum lacusprofundi (strain ATCC 49239 / DSM 5036 / JCM 8891 / ACAM 34).